Consider the following 132-residue polypeptide: Small ribosomal subunit protein uS8 (132 aa).

The protein belongs to the universal ribosomal protein uS8 family. Part of the 30S ribosomal subunit. Contacts proteins S5 and S12.

In terms of biological role, one of the primary rRNA binding proteins, it binds directly to 16S rRNA central domain where it helps coordinate assembly of the platform of the 30S subunit. The chain is Small ribosomal subunit protein uS8 from Azorhizobium caulinodans (strain ATCC 43989 / DSM 5975 / JCM 20966 / LMG 6465 / NBRC 14845 / NCIMB 13405 / ORS 571).